A 318-amino-acid polypeptide reads, in one-letter code: Thymidylate synthase (318 aa).

DUMP-binding positions include arginine 25 and arginine 180–arginine 181. The active-site Nucleophile is the cysteine 200. DUMP contacts are provided by residues arginine 220–aspartate 223, asparagine 231, and histidine 261–tyrosine 263. Residue aspartate 223 coordinates (6R)-5,10-methylene-5,6,7,8-tetrahydrofolate. Alanine 317 is a (6R)-5,10-methylene-5,6,7,8-tetrahydrofolate binding site.

The protein belongs to the thymidylate synthase family. Bacterial-type ThyA subfamily. In terms of assembly, homodimer.

The protein localises to the cytoplasm. It carries out the reaction dUMP + (6R)-5,10-methylene-5,6,7,8-tetrahydrofolate = 7,8-dihydrofolate + dTMP. Its pathway is pyrimidine metabolism; dTTP biosynthesis. Functionally, catalyzes the reductive methylation of 2'-deoxyuridine-5'-monophosphate (dUMP) to 2'-deoxythymidine-5'-monophosphate (dTMP) while utilizing 5,10-methylenetetrahydrofolate (mTHF) as the methyl donor and reductant in the reaction, yielding dihydrofolate (DHF) as a by-product. This enzymatic reaction provides an intracellular de novo source of dTMP, an essential precursor for DNA biosynthesis. The sequence is that of Thymidylate synthase from Bacillus thuringiensis subsp. konkukian (strain 97-27).